Here is a 342-residue protein sequence, read N- to C-terminus: Lipase B (342 aa).

The signal sequence occupies residues 1 to 18 (MKLLSLTGVAGVLATCVA). A propeptide spanning residues 19 to 25 (ATPLVKR) is cleaved from the precursor. A disulfide bond links cysteine 47 and cysteine 89. Asparagine 99 carries N-linked (GlcNAc...) asparagine glycosylation. Residues serine 130, aspartate 212, and histidine 249 contribute to the active site. Cystine bridges form between cysteine 241-cysteine 283 and cysteine 318-cysteine 336.

It carries out the reaction a triacylglycerol + H2O = a diacylglycerol + a fatty acid + H(+). Hydrolysis of triglycerides. Is very stereospecific both in hydrolysis and in organic synthesis and has a potentially important application in glucolipid synthesis. The chain is Lipase B from Pseudozyma antarctica (Yeast).